A 359-amino-acid chain; its full sequence is UDP-N-acetylglucosamine--N-acetylmuramyl-(pentapeptide) pyrophosphoryl-undecaprenol N-acetylglucosamine transferase (359 aa).

Residues 15–17 (TGG), Asn127, Arg166, Ser191, Ile245, 264–269 (ALTVSE), and Gln290 contribute to the UDP-N-acetyl-alpha-D-glucosamine site.

This sequence belongs to the glycosyltransferase 28 family. MurG subfamily.

The protein localises to the cell inner membrane. It carries out the reaction di-trans,octa-cis-undecaprenyl diphospho-N-acetyl-alpha-D-muramoyl-L-alanyl-D-glutamyl-meso-2,6-diaminopimeloyl-D-alanyl-D-alanine + UDP-N-acetyl-alpha-D-glucosamine = di-trans,octa-cis-undecaprenyl diphospho-[N-acetyl-alpha-D-glucosaminyl-(1-&gt;4)]-N-acetyl-alpha-D-muramoyl-L-alanyl-D-glutamyl-meso-2,6-diaminopimeloyl-D-alanyl-D-alanine + UDP + H(+). The protein operates within cell wall biogenesis; peptidoglycan biosynthesis. In terms of biological role, cell wall formation. Catalyzes the transfer of a GlcNAc subunit on undecaprenyl-pyrophosphoryl-MurNAc-pentapeptide (lipid intermediate I) to form undecaprenyl-pyrophosphoryl-MurNAc-(pentapeptide)GlcNAc (lipid intermediate II). The protein is UDP-N-acetylglucosamine--N-acetylmuramyl-(pentapeptide) pyrophosphoryl-undecaprenol N-acetylglucosamine transferase of Pseudomonas putida (strain GB-1).